The sequence spans 188 residues: ATP synthase subunit delta (188 aa).

Belongs to the ATPase delta chain family. In terms of assembly, F-type ATPases have 2 components, F(1) - the catalytic core - and F(0) - the membrane proton channel. F(1) has five subunits: alpha(3), beta(3), gamma(1), delta(1), epsilon(1). F(0) has three main subunits: a(1), b(2) and c(10-14). The alpha and beta chains form an alternating ring which encloses part of the gamma chain. F(1) is attached to F(0) by a central stalk formed by the gamma and epsilon chains, while a peripheral stalk is formed by the delta and b chains.

It is found in the cell membrane. Functionally, f(1)F(0) ATP synthase produces ATP from ADP in the presence of a proton or sodium gradient. F-type ATPases consist of two structural domains, F(1) containing the extramembraneous catalytic core and F(0) containing the membrane proton channel, linked together by a central stalk and a peripheral stalk. During catalysis, ATP synthesis in the catalytic domain of F(1) is coupled via a rotary mechanism of the central stalk subunits to proton translocation. In terms of biological role, this protein is part of the stalk that links CF(0) to CF(1). It either transmits conformational changes from CF(0) to CF(1) or is implicated in proton conduction. The polypeptide is ATP synthase subunit delta (Malacoplasma penetrans (strain HF-2) (Mycoplasma penetrans)).